Consider the following 97-residue polypeptide: Small ribosomal subunit protein bS6 (97 aa).

Belongs to the bacterial ribosomal protein bS6 family.

Functionally, binds together with bS18 to 16S ribosomal RNA. The polypeptide is Small ribosomal subunit protein bS6 (Bifidobacterium longum (strain NCC 2705)).